A 146-amino-acid chain; its full sequence is Probable U6 snRNA-associated Sm-like protein LSm4 (146 aa).

Residues 2 to 75 (LPLSLLKTAQ…IKYLRVPDEV (74 aa)) enclose the Sm domain. Positions 80–91 (QEEAKSRTDRKP) are enriched in basic and acidic residues. Residues 80-146 (QEEAKSRTDR…GGRGGGRGRG (67 aa)) are disordered. The span at 137-146 (GGRGGGRGRG) shows a compositional bias: gly residues.

It belongs to the snRNP Sm proteins family. In terms of assembly, LSm subunits form a heteromer with a doughnut shape.

The protein localises to the nucleus. Its function is as follows. Binds specifically to the 3'-terminal U-tract of U6 snRNA. The chain is Probable U6 snRNA-associated Sm-like protein LSm4 from Nicotiana tabacum (Common tobacco).